The primary structure comprises 546 residues: Chaperonin GroEL 1 (546 aa).

ATP-binding positions include 29–32 (TLGP), 86–90 (DGTTT), Gly-414, and Asp-499.

It belongs to the chaperonin (HSP60) family. As to quaternary structure, forms a cylinder of 14 subunits composed of two heptameric rings stacked back-to-back. Interacts with the co-chaperonin GroES.

Its subcellular location is the cytoplasm. It carries out the reaction ATP + H2O + a folded polypeptide = ADP + phosphate + an unfolded polypeptide.. In terms of biological role, together with its co-chaperonin GroES, plays an essential role in assisting protein folding. The GroEL-GroES system forms a nano-cage that allows encapsulation of the non-native substrate proteins and provides a physical environment optimized to promote and accelerate protein folding. This chain is Chaperonin GroEL 1, found in Roseiflexus sp. (strain RS-1).